A 299-amino-acid chain; its full sequence is Large ribosomal subunit protein eL22 (299 aa).

Disordered stretches follow at residues 1-142 and 155-178; these read MAPT…AAPA and VAKP…KKNV. Composition is skewed to basic and acidic residues over residues 33–42 and 55–64; these read GKVEKPKAEA and KASEAAKDVK. Low complexity-rich tracts occupy residues 65–98 and 105–142; these read AAAA…AAAA and AAAA…AAPA.

It belongs to the eukaryotic ribosomal protein eL22 family.

This chain is Large ribosomal subunit protein eL22 (RpL22), found in Drosophila melanogaster (Fruit fly).